A 461-amino-acid chain; its full sequence is Phosphomethylpyrimidine synthase (461 aa).

Substrate is bound by residues Asn80, Met109, Tyr139, His174, Ser194–Gly196, Asp235–Arg238, and Glu274. His278 is a binding site for Zn(2+). Tyr301 contributes to the substrate binding site. Zn(2+) is bound at residue His342. The [4Fe-4S] cluster site is built by Cys422, Cys425, and Cys430.

Belongs to the ThiC family. Homodimer. Requires [4Fe-4S] cluster as cofactor.

The enzyme catalyses 5-amino-1-(5-phospho-beta-D-ribosyl)imidazole + S-adenosyl-L-methionine = 4-amino-2-methyl-5-(phosphooxymethyl)pyrimidine + CO + 5'-deoxyadenosine + formate + L-methionine + 3 H(+). It participates in cofactor biosynthesis; thiamine diphosphate biosynthesis. Catalyzes the synthesis of the hydroxymethylpyrimidine phosphate (HMP-P) moiety of thiamine from aminoimidazole ribotide (AIR) in a radical S-adenosyl-L-methionine (SAM)-dependent reaction. This chain is Phosphomethylpyrimidine synthase, found in Nautilia profundicola (strain ATCC BAA-1463 / DSM 18972 / AmH).